The primary structure comprises 709 residues: Polyribonucleotide nucleotidyltransferase (709 aa).

Asp-490 and Asp-496 together coordinate Mg(2+). The KH domain maps to 557–616 (PKVITMRVLPEKIPVIIGPSGKNIKKIIDETGVKIDLDQEGLVRIYAVDGESADKAKEMI). Residues 626–694 (GEVYMGKVTR…EMGRAKVSLK (69 aa)) form the S1 motif domain.

This sequence belongs to the polyribonucleotide nucleotidyltransferase family. Mg(2+) is required as a cofactor.

It is found in the cytoplasm. It carries out the reaction RNA(n+1) + phosphate = RNA(n) + a ribonucleoside 5'-diphosphate. In terms of biological role, involved in mRNA degradation. Catalyzes the phosphorolysis of single-stranded polyribonucleotides processively in the 3'- to 5'-direction. The polypeptide is Polyribonucleotide nucleotidyltransferase (Persephonella marina (strain DSM 14350 / EX-H1)).